The primary structure comprises 602 residues: Leishmanolysin (602 aa).

An N-terminal signal peptide occupies residues 1 to 39 (MSVDSSSTHRRRCVAARLVRLAAAGAAVTVAVGTAAAWA). Residues 40–100 (HAGALQHRCV…DPRPGSARSV (61 aa)) constitute a propeptide, activation peptide. Intrachain disulfides connect Cys125-Cys142 and Cys191-Cys230. His264 is a Zn(2+) binding site. Residue Glu265 is part of the active site. Position 268 (His268) interacts with Zn(2+). An N-linked (GlcNAc...) asparagine glycan is attached at Asn300. 7 disulfides stabilise this stretch: Cys314-Cys386, Cys393-Cys455, Cys406-Cys425, Cys415-Cys489, Cys466-Cys510, Cys515-Cys565, and Cys535-Cys558. Residue His334 participates in Zn(2+) binding. Asn407 carries an N-linked (GlcNAc...) asparagine glycan. Asn534 carries an N-linked (GlcNAc...) asparagine glycan. Asn577 is lipidated: GPI-anchor amidated asparagine. The propeptide at 578–602 (TAAGRRGPRAAATALLVAALLAVAL) is removed in mature form.

This sequence belongs to the peptidase M8 family. Zn(2+) serves as cofactor. Post-translationally, the phosphatidylinositol moiety of the GPI-anchor contains a fully saturated, unbranched 1-O-alkyl chain (mainly C24:0) and a mixture of fully saturated unbranched 2-O-acyl chains (C12:0, C14:0, C16:0, and C18:0).

It localises to the cell membrane. It catalyses the reaction Preference for hydrophobic residues at P1 and P1' and basic residues at P2' and P3'. A model nonapeptide is cleaved at -Ala-Tyr-|-Leu-Lys-Lys-.. In terms of biological role, has an integral role during the infection of macrophages in the mammalian host. In Leishmania major, this protein is Leishmanolysin (gp63).